Here is a 386-residue protein sequence, read N- to C-terminus: RNA polymerase sigma factor SigA (386 aa).

A sigma-70 factor domain-2 region spans residues 154–224 (LAEANLRLVV…TRAIADQART (71 aa)). The Interaction with polymerase core subunit RpoC signature appears at 178 to 181 (DLIQ). Residues 233-309 (ETINKLIRVQ…DDVIESPVDY (77 aa)) are sigma-70 factor domain-3. Residues 322 to 375 (VMDTLTDREENVLRMRFGLDDGRMHTLEDVGKQFKVTRERIRQIEAKAIKKLRH) are sigma-70 factor domain-4. The segment at residues 348–367 (LEDVGKQFKVTRERIRQIEA) is a DNA-binding region (H-T-H motif).

This sequence belongs to the sigma-70 factor family. RpoD/SigA subfamily. As to quaternary structure, interacts transiently with the RNA polymerase catalytic core.

The protein localises to the cytoplasm. Its function is as follows. Sigma factors are initiation factors that promote the attachment of RNA polymerase to specific initiation sites and are then released. This sigma factor is the primary sigma factor during exponential growth. This chain is RNA polymerase sigma factor SigA, found in Lactococcus lactis subsp. lactis (strain IL1403) (Streptococcus lactis).